Here is a 590-residue protein sequence, read N- to C-terminus: Shugoshin (590 aa).

Residues 1 to 20 (MPKRKIAPNKESSRRTVSHD) are disordered. The segment covering 11–20 (ESSRRTVSHD) has biased composition (basic and acidic residues). Residues 25-86 (QIQEFQNLMD…QENVTLRSKT (62 aa)) adopt a coiled-coil conformation. Disordered stretches follow at residues 133 to 235 (LRTM…QVEE), 291 to 337 (PSNP…HSMK), and 411 to 550 (RNRE…NSNI). The span at 173–185 (SFNKDDGPDLEPK) shows a compositional bias: basic and acidic residues. The segment covering 302–326 (PSATLPTTTSDASTVYPSSSSSTNS) has biased composition (low complexity). A compositionally biased stretch (basic residues) spans 328-337 (PKTKIKHSMK). Residues 448–459 (KKTEDEIHEDTA) are compositionally biased toward basic and acidic residues. Over residues 513 to 526 (IVNNLSDENSTTRP) the composition is skewed to polar residues. The segment covering 527-550 (SKSSKGTSNNNNNYNNFDNNNSNI) has biased composition (low complexity).

Belongs to the shugoshin family. Post-translationally, ubiquitinated by the anaphase promoting complex (APC) at the onset of anaphase, conducting to its degradation.

The protein resides in the chromosome. Its subcellular location is the centromere. It localises to the kinetochore. The protein localises to the cytoplasm. It is found in the cytoskeleton. The protein resides in the spindle pole. Plays a central role in chromosome cohesion during mitosis and meiosis divisions by preventing premature dissociation of cohesin complex from centromeres after prophase, when most of cohesin complex dissociates from chromosomes arms. Probably act by protecting REC8 and RAD21 from separase degradation during anaphase. Also acts as a spindle checkpoint component required for sensing tension between sister chromatids during mitosis, its degradation when they separate preventing cell cycle arrest and chromosome loss in anaphase, a time when sister chromatids are no longer under tension. The protein is Shugoshin (SGO1) of Saccharomyces cerevisiae (strain ATCC 204508 / S288c) (Baker's yeast).